The chain runs to 388 residues: MSSLKRVAIVVGEASGDILGAGLMAALKKRYPDCEFEGIGGPKMLALGFNSLYQMDRLAVMGFVEPLKRLPELLGIRKSLRQRYLTNPPDVFIGIDAPDFNLNLEVNLREAGVPVVHYVSPSVWAWRRGRLKKIAKAVDLMLTLFPFESSFFNEQNIPNLFVGHPLADTIPLENEKTGARERLGLSAENNERWVALLPGSRGGEVEHLCERFLLAAQQSFAGRPNLRIIIPAANDARHSQISEVLKRYSELPVTLLHGQSHDAMLAADAILIASGTATLEAMLLKRPMVIAYHMAAFSYWLLSKLVKSKFVGLPNLLADKELVPELLQHNATPSQLSAALNVYLDSEKTTQQLIEQFNAIHLQLRRDASETAAQGIVDMLAAKRDIAR.

It belongs to the LpxB family.

The catalysed reaction is a lipid X + a UDP-2-N,3-O-bis[(3R)-3-hydroxyacyl]-alpha-D-glucosamine = a lipid A disaccharide + UDP + H(+). It participates in bacterial outer membrane biogenesis; LPS lipid A biosynthesis. Functionally, condensation of UDP-2,3-diacylglucosamine and 2,3-diacylglucosamine-1-phosphate to form lipid A disaccharide, a precursor of lipid A, a phosphorylated glycolipid that anchors the lipopolysaccharide to the outer membrane of the cell. This is Lipid-A-disaccharide synthase from Saccharophagus degradans (strain 2-40 / ATCC 43961 / DSM 17024).